We begin with the raw amino-acid sequence, 226 residues long: Small ribosomal subunit protein uS3 (226 aa).

The 71-residue stretch at 39-109 (IYKFFDKFTR…KLDVNLKVLT (71 aa)) folds into the KH type-2 domain.

This sequence belongs to the universal ribosomal protein uS3 family. In terms of assembly, part of the 30S ribosomal subunit. Forms a tight complex with proteins S10 and S14.

In terms of biological role, binds the lower part of the 30S subunit head. Binds mRNA in the 70S ribosome, positioning it for translation. This Mycoplasmopsis synoviae (strain 53) (Mycoplasma synoviae) protein is Small ribosomal subunit protein uS3.